The primary structure comprises 441 residues: Ribulose bisphosphate carboxylase large chain (441 aa).

Substrate is bound by residues asparagine 89 and threonine 139. Lysine 141 serves as the catalytic Proton acceptor. A substrate-binding site is contributed by lysine 143. Residues lysine 167, aspartate 169, and glutamate 170 each contribute to the Mg(2+) site. Lysine 167 is subject to N6-carboxylysine. Histidine 260 serves as the catalytic Proton acceptor. Substrate is bound by residues arginine 261, histidine 293, and serine 345.

It belongs to the RuBisCO large chain family. Type I subfamily. In terms of assembly, heterohexadecamer of 8 large chains and 8 small chains; disulfide-linked. The disulfide link is formed within the large subunit homodimers. Mg(2+) is required as a cofactor. The disulfide bond which can form in the large chain dimeric partners within the hexadecamer appears to be associated with oxidative stress and protein turnover.

The protein localises to the plastid. Its subcellular location is the chloroplast. The catalysed reaction is 2 (2R)-3-phosphoglycerate + 2 H(+) = D-ribulose 1,5-bisphosphate + CO2 + H2O. It catalyses the reaction D-ribulose 1,5-bisphosphate + O2 = 2-phosphoglycolate + (2R)-3-phosphoglycerate + 2 H(+). Its function is as follows. RuBisCO catalyzes two reactions: the carboxylation of D-ribulose 1,5-bisphosphate, the primary event in carbon dioxide fixation, as well as the oxidative fragmentation of the pentose substrate in the photorespiration process. Both reactions occur simultaneously and in competition at the same active site. The polypeptide is Ribulose bisphosphate carboxylase large chain (Polemonium reptans (Greek valerian)).